The chain runs to 202 residues: LexA repressor (202 aa).

Positions 28–48 (RAEIAQQLGFRSPNAAEEHLK) form a DNA-binding region, H-T-H motif. Catalysis depends on for autocatalytic cleavage activity residues serine 119 and lysine 156.

This sequence belongs to the peptidase S24 family. As to quaternary structure, homodimer.

The catalysed reaction is Hydrolysis of Ala-|-Gly bond in repressor LexA.. Represses a number of genes involved in the response to DNA damage (SOS response), including recA and lexA. Binds to the 16 bp palindromic sequence 5'-CTGTATATATATACAG-3'. In the presence of single-stranded DNA, RecA interacts with LexA causing an autocatalytic cleavage which disrupts the DNA-binding part of LexA, leading to derepression of the SOS regulon and eventually DNA repair. This chain is LexA repressor, found in Pectobacterium carotovorum subsp. carotovorum (Erwinia carotovora subsp. carotovora).